The primary structure comprises 77 residues: Cysteine-rich protein 1 (77 aa).

Residues 2-63 (PKCPKCNKEV…HPCYAAMFGP (62 aa)) enclose the LIM zinc-binding domain. 2 positions are modified to N6-acetyllysine: Lys9 and Lys22. Residue Arg68 is modified to Omega-N-methylarginine.

Seems to have a role in zinc absorption and may function as an intracellular zinc transport protein. In Homo sapiens (Human), this protein is Cysteine-rich protein 1 (CRIP1).